The sequence spans 189 residues: GTPase HRas (189 aa).

10 to 17 (GAKGVGKS) provides a ligand contact to GTP. An Effector region motif is present at residues 32–40 (YDPTIEDSY). GTP-binding positions include 57–61 (DTAGQ) and 116–119 (NKCD). S-palmitoyl cysteine; by host attachment occurs at residues Cys-181 and Cys-184. At Cys-186 the chain carries Cysteine methyl ester; by host. Cys-186 carries the S-farnesyl cysteine; by host lipid modification. Residues 187 to 189 (VLS) constitute a propeptide, removed in mature form.

This sequence belongs to the small GTPase superfamily. Ras family.

The protein localises to the host cell membrane. The catalysed reaction is GTP + H2O = GDP + phosphate + H(+). Alternates between an inactive form bound to GDP and an active form bound to GTP. Activated by a guanine nucleotide-exchange factor (GEF) and inactivated by a GTPase-activating protein (GAP). This is GTPase HRas (H-RAS) from Moloney murine sarcoma virus (MoMSV).